We begin with the raw amino-acid sequence, 628 residues long: E3 SUMO-protein ligase PIAS3 (628 aa).

Residues 1-200 are interaction with CCAR2; it reads MAELGELKHM…QLRFCLCETS (200 aa). The SAP domain maps to 11–45; that stretch reads VMSFRVSELQVLLGFAGRNKSGRKHELLAKALHLL. Residues 19-23 carry the LXXLL motif motif; the sequence is LQVLL. Residues lysine 46, lysine 56, lysine 230, and lysine 307 each participate in a glycyl lysine isopeptide (Lys-Gly) (interchain with G-Cter in SUMO2) cross-link. In terms of domain architecture, PINIT spans 115-280; sequence MHPPLPQPVH…SLSVYLVRQL (166 aa). The SP-RING-type zinc finger occupies 312–393; it reads PDSEVATTSL…FMEILNSCSD (82 aa). Zn(2+)-binding residues include cysteine 343, histidine 345, cysteine 366, and cysteine 369. The tract at residues 450–460 is SUMO1-binding; that stretch reads LTIESSSDEED. Residues lysine 466 and lysine 482 each participate in a glycyl lysine isopeptide (Lys-Gly) (interchain with G-Cter in SUMO2) cross-link. Residues 571–628 are disordered; the sequence is GPLAPTLGSSHRSSTPAPPPGRVSSIVAPGSSLREGHGGPLPSGPSLTGCRSDVISLD.

This sequence belongs to the PIAS family. Monomer. Interacts with PLAG1 and ZFHX3. Interacts with STAT5A; the interaction occurs on stimulation by PRL. Binds SUMO1 and UBE2I. Interacts with AR, BCL11A, HMGA2, IRF1 and NCOA2. Interacts with MITF; the interaction inhibits the transcriptional activity of MITF. Interacts with STAT3; the interaction occurs on stimulation by IL6, CNTF or OSM and inhibits the DNA binding activity of STAT3. Interacts with GFI1; the interaction relieves the inhibitory effect of PIAS3 on STAT3-mediated transcriptional activity. Interacts with MTA1. Interacts with CCAR2 (via N-terminus). Interacts with TRIM8. Interacts with PRDM1. Post-translationally, sumoylated. Expressed in kidney, heart, spleen, brain and cerebellum; weak expression, if any, in liver and lung.

The protein resides in the cytoplasm. The protein localises to the nucleus. It is found in the nucleus speckle. Its pathway is protein modification; protein sumoylation. Functions as an E3-type small ubiquitin-like modifier (SUMO) ligase, stabilizing the interaction between UBE2I and the substrate, and as a SUMO-tethering factor. Plays a crucial role as a transcriptional coregulation in various cellular pathways, including the STAT pathway and the steroid hormone signaling pathway. Repressor of STAT3 signaling via inhibiting STAT3 DNA-binding and suppressing cell growth. Repressor of MITF transcriptional activity. Enhances the sumoylation of MTA1 and may participate in its paralog-selective sumoylation. Sumoylates CCAR2 which promotes its interaction with SIRT1. Diminishes the sumoylation of ZFHX3 by preventing the colocalization of ZFHX3 with SUMO1 in the nucleus. This is E3 SUMO-protein ligase PIAS3 (Pias3) from Mus musculus (Mouse).